The sequence spans 320 residues: MAASSEVSIDPDQWFYIYSLERVAYVCERVGSPVMEEAELRRRRRKRPFLTTTHDELELQMEDLVDELYGVDEQGSSSAAARKRRLTAEQVRALERSFEEEKRKLEPERKSELARRLGIAPRQVAVWFQNRRARWKTKQLELDFDRLRAAHDELLAGRTALAADNESLRSQVILLTEKLQANGKSPSPSPAPAEQTAVPAAPESAKSFQLEEGRRLYDAAGSTTTTNGGGGGVAMPAARVAAARAASNDSPESYFAGARSPPSSSEDDCGGAGSDDDYPSSSVLLPVDATLVGDAFEHAVAATVAADEEAPLNSWEWFWN.

The segment at residues 79–139 (AAARKRRLTA…NRRARWKTKQ (61 aa)) is a DNA-binding region (homeobox). Positions 138-182 (KQLELDFDRLRAAHDELLAGRTALAADNESLRSQVILLTEKLQAN) are leucine-zipper. 2 disordered regions span residues 181–209 (ANGKSPSPSPAPAEQTAVPAAPESAKSFQ) and 249–282 (DSPESYFAGARSPPSSSEDDCGGAGSDDDYPSSS). Residues 265 to 278 (SEDDCGGAGSDDDY) show a composition bias toward acidic residues.

The protein belongs to the HD-ZIP homeobox family. Class I subfamily. In terms of tissue distribution, expressed in roots, leaf sheaths and blades and panicles.

The protein resides in the nucleus. Functionally, probable transcription factor. This is Homeobox-leucine zipper protein HOX25 (HOX25) from Oryza sativa subsp. japonica (Rice).